The chain runs to 426 residues: Tyrosine--tRNA ligase (426 aa).

Residue Y35 coordinates L-tyrosine. Positions 40–49 match the 'HIGH' region motif; it reads PTADSLHIGH. 2 residues coordinate L-tyrosine: Y172 and Q176. The 'KMSKS' region signature appears at 232-236; sequence KLGKS. Residue K235 participates in ATP binding. The S4 RNA-binding domain maps to 357–414; sequence ENIKDILVNSKLSKSKNNAKSVILSSSIRINNKKQKSIDFMFKKEDKLFNLFTLIKKG.

The protein belongs to the class-I aminoacyl-tRNA synthetase family. TyrS type 1 subfamily. In terms of assembly, homodimer.

It is found in the cytoplasm. It catalyses the reaction tRNA(Tyr) + L-tyrosine + ATP = L-tyrosyl-tRNA(Tyr) + AMP + diphosphate + H(+). Functionally, catalyzes the attachment of tyrosine to tRNA(Tyr) in a two-step reaction: tyrosine is first activated by ATP to form Tyr-AMP and then transferred to the acceptor end of tRNA(Tyr). The polypeptide is Tyrosine--tRNA ligase (Wigglesworthia glossinidia brevipalpis).